A 384-amino-acid polypeptide reads, in one-letter code: Zinc metalloproteinase nas-12 (384 aa).

The first 25 residues, 1-25 (MLYIPQFSIYFCLGYLLLFCKISNA), serve as a signal peptide directing secretion. The 199-residue stretch at 73–271 (VSIKGSSMNR…EKLNRLGQCG (199 aa)) folds into the Peptidase M12A domain. 5 cysteine pairs are disulfide-bonded: C116/C270, C137/C156, C287/C325, C296/C318, and C305/C322. H164 lines the Zn(2+) pocket. Residue E165 is part of the active site. H168 and H174 together coordinate Zn(2+). Residues 287 to 325 (CQDVATAVSCEGNRRRGMCKNPFYKQMMIKSCQKTCRLC) enclose the ShKT 1 domain. N340 carries N-linked (GlcNAc...) asparagine glycosylation. Cystine bridges form between C348–C384, C355–C377, and C364–C381. The 37-residue stretch at 348–384 (CEDKHPRCDIYSHNGFCTLPFYDDVRYQLCAKTCNLC) folds into the ShKT 2 domain.

The cofactor is Zn(2+). In terms of tissue distribution, expressed in pharyngeal glands.

The protein resides in the secreted. Metalloprotease. The chain is Zinc metalloproteinase nas-12 (nas-12) from Caenorhabditis elegans.